We begin with the raw amino-acid sequence, 123 residues long: Protein TraJ (123 aa).

In terms of assembly, monomer.

The protein localises to the cytoplasm. Transfer of plasmid RP4 during bacterial conjugation requires the plasmid-encoded TraJ protein, which binds to a 19-base pair invert sequence repetition within the transfer origin. TraJ protein is bound to only one side of the DNA helix. This nucleoprotein structure is the initial complex in the pathway to assemble a functional relaxosome. The polypeptide is Protein TraJ (traJ) (Escherichia coli).